We begin with the raw amino-acid sequence, 549 residues long: Hydroxylamine reductase (549 aa).

[4Fe-4S] cluster contacts are provided by Cys3, Cys6, Cys15, and Cys21. Hybrid [4Fe-2O-2S] cluster contacts are provided by His244, Glu268, Cys313, Cys405, Cys433, Cys458, Glu492, and Lys494. Cys405 is modified (cysteine persulfide).

This sequence belongs to the HCP family. [4Fe-4S] cluster serves as cofactor. Hybrid [4Fe-2O-2S] cluster is required as a cofactor.

The protein localises to the cytoplasm. The enzyme catalyses A + NH4(+) + H2O = hydroxylamine + AH2 + H(+). Catalyzes the reduction of hydroxylamine to form NH(3) and H(2)O. The polypeptide is Hydroxylamine reductase (Gloeothece citriformis (strain PCC 7424) (Cyanothece sp. (strain PCC 7424))).